Here is a 217-residue protein sequence, read N- to C-terminus: ATP phosphoribosyltransferase (217 aa).

This sequence belongs to the ATP phosphoribosyltransferase family. Short subfamily. Heteromultimer composed of HisG and HisZ subunits.

It is found in the cytoplasm. The enzyme catalyses 1-(5-phospho-beta-D-ribosyl)-ATP + diphosphate = 5-phospho-alpha-D-ribose 1-diphosphate + ATP. It participates in amino-acid biosynthesis; L-histidine biosynthesis; L-histidine from 5-phospho-alpha-D-ribose 1-diphosphate: step 1/9. Its function is as follows. Catalyzes the condensation of ATP and 5-phosphoribose 1-diphosphate to form N'-(5'-phosphoribosyl)-ATP (PR-ATP). Has a crucial role in the pathway because the rate of histidine biosynthesis seems to be controlled primarily by regulation of HisG enzymatic activity. In Polaromonas naphthalenivorans (strain CJ2), this protein is ATP phosphoribosyltransferase.